Reading from the N-terminus, the 2108-residue chain is Mycocerosic acid synthase-like polyketide synthase (2108 aa).

An N-terminal signal peptide occupies residues 1 to 23 (MGKERTKTVDRTRVTPVAVIGMG). Residue cysteine 24 is the site of N-palmitoyl cysteine attachment. Cysteine 24 is lipidated: S-diacylglycerol cysteine. In terms of domain architecture, Ketosynthase family 3 (KS3) spans 24–436 (CRLPGGIDSP…GTNVHAIVEQ (413 aa)). Cysteine 185 acts as the Acyl-thioester intermediate; for beta-ketoacyl synthase activity in catalysis. Residues histidine 320 and histidine 356 each act as for beta-ketoacyl synthase activity in the active site. Residues 438-542 (PVPAPESGAP…PYPPAVGQDD (105 aa)) are linker domain (LD). The tract at residues 543–842 (RGPVWVFSGQ…AAALAGMRRE (300 aa)) is acyltransferase (AT). The Acyl-ester intermediate; for acyltransferase activity role is filled by serine 634. A dehydratase (DH) region spans residues 900-1184 (NTVAVHPLLG…LAVRGLQLGT (285 aa)). The segment at 905–1025 (HPLLGSHVRL…AVLHVVREAD (121 aa)) is N-terminal hotdog fold. Positions 905-1191 (HPLLGSHVRL…LGTGASQASE (287 aa)) constitute a PKS/mFAS DH domain. The Proton acceptor; for dehydratase activity role is filled by histidine 938. The C-terminal hotdog fold stretch occupies residues 1044 to 1191 (PHKVDGAEVR…LGTGASQASE (148 aa)). Catalysis depends on aspartate 1108, which acts as the Proton donor; for dehydratase activity. A pseudo beta-ketoacyl reductase (PsiKR) region spans residues 1220-1391 (AWLLISTCDA…SGEDETAWRN (172 aa)). The segment at 1419–1743 (AGMRLQIRTP…EHTGKLILDV (325 aa)) is enoylreductase (ER). A beta-ketoacyl reductase (KR) region spans residues 1765–2004 (GSYIITGGLG…HSPFAEKFQS (240 aa)). NADP(+)-binding positions include 1773–1776 (LGGL), 1796–1799 (SRSQ), 1824–1825 (DI), and 1897–1898 (FS). The Carrier domain maps to 2025 to 2101 (EEWPDRLRRL…DLMCDKLAAD (77 aa)). The residue at position 2060 (serine 2060) is an O-(pantetheine 4'-phosphoryl)serine.

In terms of assembly, homodimer.

It localises to the cell membrane. It participates in lipid metabolism; fatty acid biosynthesis. Functionally, polyketide synthase likely involved in the biosynthesis of a polymethyl-branched fatty acid (PMB-FA) that might only be produced during host infection. Is required for the full virulence of M.tuberculosis during host infection. The protein is Mycocerosic acid synthase-like polyketide synthase of Mycobacterium tuberculosis (strain ATCC 25618 / H37Rv).